We begin with the raw amino-acid sequence, 270 residues long: MSESLEKPVVKIALGIEYDGSKYYGWQRQQEVRSVQEKLEKALSQVANEPINVFCAGRTDAGVHATGQVVHFETTAIRKDAAWTLGVNANLPGDIAVRWVKDVPAEFHARFSATARRYRYVIYNHRLRPAVLSQGVTHYHLPLDAERMHRAAQCLIGENDFTSFRAVQCQSRTPWRNLMHINVERFGAYIVVDIKANAFVHHMVRNIVGSLMEIGCGNQPESWMAELLAAKDRTLAAATAKAEGLYLVSVDYPAQFELPKPPMGPLFLAD.

Asp60 acts as the Nucleophile in catalysis. Tyr118 contacts substrate.

This sequence belongs to the tRNA pseudouridine synthase TruA family. In terms of assembly, homodimer.

The catalysed reaction is uridine(38/39/40) in tRNA = pseudouridine(38/39/40) in tRNA. Functionally, formation of pseudouridine at positions 38, 39 and 40 in the anticodon stem and loop of transfer RNAs. This Cronobacter sakazakii (strain ATCC BAA-894) (Enterobacter sakazakii) protein is tRNA pseudouridine synthase A.